The primary structure comprises 338 residues: DNA-directed RNA polymerase subunit alpha (338 aa).

The span at 1–10 (MIQKNWQTLE) shows a compositional bias: polar residues. A disordered region spans residues 1–24 (MIQKNWQTLEKPSKLDITPGSDPK). The alpha N-terminal domain (alpha-NTD) stretch occupies residues 1–234 (MIQKNWQTLE…DQLQMFINFE (234 aa)). Residues 250–338 (FNKNLLRKVD…DLAKRLEEPY (89 aa)) form an alpha C-terminal domain (alpha-CTD) region.

It belongs to the RNA polymerase alpha chain family. Homodimer. The RNAP catalytic core consists of 2 alpha, 1 beta, 1 beta' and 1 omega subunit. When a sigma factor is associated with the core the holoenzyme is formed, which can initiate transcription.

It catalyses the reaction RNA(n) + a ribonucleoside 5'-triphosphate = RNA(n+1) + diphosphate. Functionally, DNA-dependent RNA polymerase catalyzes the transcription of DNA into RNA using the four ribonucleoside triphosphates as substrates. This is DNA-directed RNA polymerase subunit alpha from Rhodospirillum centenum (strain ATCC 51521 / SW).